The sequence spans 455 residues: UDP-N-acetylmuramoylalanine--D-glutamate ligase (455 aa).

ATP is bound at residue 119–125; the sequence is GTNGKTT.

The protein belongs to the MurCDEF family.

It localises to the cytoplasm. It catalyses the reaction UDP-N-acetyl-alpha-D-muramoyl-L-alanine + D-glutamate + ATP = UDP-N-acetyl-alpha-D-muramoyl-L-alanyl-D-glutamate + ADP + phosphate + H(+). Its pathway is cell wall biogenesis; peptidoglycan biosynthesis. Its function is as follows. Cell wall formation. Catalyzes the addition of glutamate to the nucleotide precursor UDP-N-acetylmuramoyl-L-alanine (UMA). This is UDP-N-acetylmuramoylalanine--D-glutamate ligase from Listeria innocua serovar 6a (strain ATCC BAA-680 / CLIP 11262).